A 455-amino-acid polypeptide reads, in one-letter code: SUN domain-containing protein 2 (455 aa).

Residues 1–12 show a composition bias toward polar residues; sequence MSASTVSITASP. Residues 1–99 form a disordered region; it reads MSASTVSITA…RTRKSQGNKI (99 aa). Ser2 carries the post-translational modification N-acetylserine. Residues 2 to 105 lie on the Nuclear side of the membrane; sequence SASTVSITAS…GNKIDRGKWK (104 aa). A Phosphoserine modification is found at Ser63. The span at 74–88 shows a compositional bias: low complexity; it reads KSGSTATGTNTTTTQ. The short motif at 88–95 is the Nuclear localization signal element; that stretch reads QRRTRKSQ. The chain crosses the membrane as a helical span at residues 106–128; that stretch reads TVVRVFAKQFGALLLLVGLIQLI. Residues 129–455 are Perinuclear space-facing; sequence RKLTLKDSSL…ELDSVSVAHA (327 aa). The stretch at 201–225 forms a coiled coil; it reads LHSELKKVESKTERLQVSVDELNAK. The region spanning 285–447 is the SUN domain; the sequence is GGAFVMGHSD…YRFRVHGREL (163 aa).

Forms homomers (e.g. dimers, trimers and tetramers) and heteromers with SUN1. Interacts with SUN3, SUN4 and TIK. Core component of the LINC complex which is composed of inner nuclear membrane SUN domain-containing proteins coupled to outer nuclear membrane WIP and WIT proteins. The LINC complex also involves nucleoskeletal proteins CRWN/LINC and possibly KAKU4 and the cytoskeletal myosin KAKU1. Interacts with LINC1, WIP1, WIP2 and WIP3 at the nuclear envelope (NE). Interacts with SINE1, SINE2, SINE3 and SINE4. Interacts with NEAP1, NEA2 and NEAP3. In terms of tissue distribution, expressed in roots, hypocotyls, cotyledons and leaves and inflorescences.

It is found in the nucleus inner membrane. Its subcellular location is the cytoplasm. The protein resides in the cytoskeleton. It localises to the phragmoplast. The protein localises to the endoplasmic reticulum membrane. It is found in the nucleus envelope. Functionally, component of SUN-protein-containing multivariate complexes also called LINC complexes which link the nucleoskeleton and cytoskeleton by providing versatile outer nuclear membrane attachment sites for cytoskeletal filaments. Required for the maintenance and/or formation of polarized nuclear shape in root hairs. Modulates the anchoring and mobility of WIP proteins in the nuclear envelope (NE). In association with SUN1, may be involved in telomere attachment to nuclear envelope in the prophase of meiosis. As component of the SUN-WIP-WIT2-KAKU1 complex, mediates the transfer of cytoplasmic forces to the nuclear envelope (NE), leading to nuclear shape changes. This Arabidopsis thaliana (Mouse-ear cress) protein is SUN domain-containing protein 2.